Reading from the N-terminus, the 290-residue chain is Porphobilinogen deaminase (290 aa).

Cys237 is modified (S-(dipyrrolylmethanemethyl)cysteine).

This sequence belongs to the HMBS family. As to quaternary structure, monomer. The cofactor is dipyrromethane.

The enzyme catalyses 4 porphobilinogen + H2O = hydroxymethylbilane + 4 NH4(+). It functions in the pathway porphyrin-containing compound metabolism; protoporphyrin-IX biosynthesis; coproporphyrinogen-III from 5-aminolevulinate: step 2/4. Its function is as follows. Tetrapolymerization of the monopyrrole PBG into the hydroxymethylbilane pre-uroporphyrinogen in several discrete steps. The protein is Porphobilinogen deaminase of Clostridium botulinum (strain Loch Maree / Type A3).